Consider the following 80-residue polypeptide: Exodeoxyribonuclease 7 small subunit (80 aa).

This sequence belongs to the XseB family. In terms of assembly, heterooligomer composed of large and small subunits.

Its subcellular location is the cytoplasm. It catalyses the reaction Exonucleolytic cleavage in either 5'- to 3'- or 3'- to 5'-direction to yield nucleoside 5'-phosphates.. Its function is as follows. Bidirectionally degrades single-stranded DNA into large acid-insoluble oligonucleotides, which are then degraded further into small acid-soluble oligonucleotides. This chain is Exodeoxyribonuclease 7 small subunit, found in Pseudomonas fluorescens (strain ATCC BAA-477 / NRRL B-23932 / Pf-5).